A 407-amino-acid polypeptide reads, in one-letter code: Putative nickel insertion protein (407 aa).

This sequence belongs to the LarC family.

The chain is Putative nickel insertion protein from Gloeothece citriformis (strain PCC 7424) (Cyanothece sp. (strain PCC 7424)).